A 498-amino-acid chain; its full sequence is uncharacterized protein (498 aa).

329–336 contributes to the ATP binding site; that stretch reads GNPGTGKS.

The protein localises to the secreted. Its subcellular location is the cell wall. This is an uncharacterized protein from Mycobacterium tuberculosis (strain CDC 1551 / Oshkosh).